Here is a 124-residue protein sequence, read N- to C-terminus: Small ribosomal subunit protein uS13 (124 aa).

The disordered stretch occupies residues 98-124; sequence VRGQRTRCNARTRKGPRKTVGAKRKEK.

Belongs to the universal ribosomal protein uS13 family. As to quaternary structure, part of the 30S ribosomal subunit. Forms a loose heterodimer with protein S19. Forms two bridges to the 50S subunit in the 70S ribosome.

Functionally, located at the top of the head of the 30S subunit, it contacts several helices of the 16S rRNA. In the 70S ribosome it contacts the 23S rRNA (bridge B1a) and protein L5 of the 50S subunit (bridge B1b), connecting the 2 subunits; these bridges are implicated in subunit movement. Contacts the tRNAs in the A and P-sites. The sequence is that of Small ribosomal subunit protein uS13 from Dictyoglomus turgidum (strain DSM 6724 / Z-1310).